A 476-amino-acid polypeptide reads, in one-letter code: Cysteine--tRNA ligase (476 aa).

A Zn(2+)-binding site is contributed by C27. The 'HIGH' region motif lies at 29–39 (ITPYDSVHVGH). Residues C213, H238, and E242 each coordinate Zn(2+). Positions 271–275 (KMSKS) match the 'KMSKS' region motif. Residue K274 coordinates ATP.

It belongs to the class-I aminoacyl-tRNA synthetase family. Requires Zn(2+) as cofactor.

It localises to the cytoplasm. It catalyses the reaction tRNA(Cys) + L-cysteine + ATP = L-cysteinyl-tRNA(Cys) + AMP + diphosphate. The chain is Cysteine--tRNA ligase from Pyrobaculum arsenaticum (strain DSM 13514 / JCM 11321 / PZ6).